We begin with the raw amino-acid sequence, 494 residues long: Tetracenomycin biosynthesis bifunctional cyclase/O-methyl transferase TcmN (494 aa).

Residues 11-140 (VNAPFELVWD…TTTRANMERI (130 aa)) are polyketide cyclase. Ser67 functions as the Proton acceptor; for cyclase activity in the catalytic mechanism. Active-site proton donor; for cyclase activity residues include Arg69 and Arg82. Positions 169-494 (LLLAASGRLA…TWTTLECRPV (326 aa)) are methyltransferase. Residues Asp358 and 384 to 386 (GDF) contribute to the S-adenosyl-L-methionine site. The active-site Proton acceptor; for methyltransferase activity is the His405.

In the C-terminal section; belongs to the class I-like SAM-binding methyltransferase superfamily. Cation-independent O-methyltransferase family. The tetracenomycin polyketide synthase (TCM PKS) is composed of a ketosynthase complex (TcmKL), an acyl carrier protein (TcmM), a cyclase (TcmN) and a probable second cyclase (TcmJ). TcmN is a homodimer in solution.

It carries out the reaction 10 malonyl-CoA + 8 H(+) = tetracenomycin F2 + 10 CO2 + 10 CoA + 2 H2O. It functions in the pathway antibiotic biosynthesis; tetracenomycin C biosynthesis. Its function is as follows. Involved in the biosynthesis of tetracenomycin C (TCM C). Part of a type II polyketide synthase (PKS) that catalyzes the synthesis of tetracenomycin F2 (TCM F2), a precursor of TCM C, from malonyl-CoA. The TcmN N-terminal domain, when coupled with the other components of the PKS, catalyzes the cyclization and aromatization of the linear polyketide intermediate. Catalyzes the cyclization of the first and second rings. In addition, the C-terminal domain acts as a methyltransferase. It catalyzes the specific O-methylation of tetracenomycin D3 (TCM D3) to TCM B3, using S-adenosyl-L-methionine as the methyl donor. The chain is Tetracenomycin biosynthesis bifunctional cyclase/O-methyl transferase TcmN from Streptomyces glaucescens.